Consider the following 482-residue polypeptide: Transcription factor Sox-9 (482 aa).

2 disordered regions span residues 1–66 (MNLL…ETED) and 160–274 (RLRI…FRDV). The span at 30–41 (SAGSPCPSGSGS) shows a compositional bias: low complexity. A compositionally biased stretch (polar residues) spans 42 to 52 (DTENTRPQENT). Basic and acidic residues-rich tracts occupy residues 56–66 (GDPELKKETED) and 160–174 (RLRIQHKKDHPDYKY). Lysine 61 is covalently cross-linked (Glycyl lysine isopeptide (Lys-Gly) (interchain with G-Cter in SUMO)). Positions 63–103 (ETEDEKFPVCIREAVSQVLKGYDWTLVPMPVRVNGSSKSKP) are dimerization (DIM). Positions 63 to 103 (ETEDEKFPVCIREAVSQVLKGYDWTLVPMPVRVNGSSKSKP) are PQA. The segment at residues 105 to 173 (VKRPMNAFMV…QHKKDHPDYK (69 aa)) is a DNA-binding region (HMG box). Polar residues predominate over residues 211-220 (SPHSASSMSE). The segment at 224-308 (PGEHSGQSQG…LPPNGHPGVG (85 aa)) is transactivation domain (TAM). Short sequence motifs (9aaTAD) lie at residues 276 to 285 (IGELSSEVIS) and 291 to 299 (DVNEFDQYL). The tract at residues 295–395 (FDQYLPPNGH…HSPQQLNYSS (101 aa)) is disordered. Polar residues-rich tracts occupy residues 308-326 (GSTQAPYTGSYGINSTPSA) and 351-366 (HSLSTINSEQSQSQQR). The segment at 366 to 482 (RTHIKTEQLS…QPVYTQLTRP (117 aa)) is transactivation domain (TAC). Residue lysine 370 forms a Glycyl lysine isopeptide (Lys-Gly) (interchain with G-Cter in SUMO) linkage. Low complexity predominate over residues 375-390 (SPSHYSDQQQQHSPQQ). Residues 433 to 441 (SGLYSNFSY) carry the 9aaTAD 3 motif. The disordered stretch occupies residues 448–482 (PMYTPIADTTGVPSIPQTHSPQHWEQPVYTQLTRP). The span at 458-482 (GVPSIPQTHSPQHWEQPVYTQLTRP) shows a compositional bias: polar residues.

Interacts with the sumoylation factors ube2i/ubc9 and sumo1. In terms of processing, sumoylated. Lys-370 is the major site of sumoylation, although sumoylation at Lys-61 also occurs. Sumoylation plays a key role in regulating formation of the neural crest and otic placode. As to expression, expressed in both male and female gonads from after metamorphosis through to adult stages. In the testis, expression is restricted to the supporting Sertoli-like cells. Conversely in the ovary, expression is localized to primary oocytes (at protein level). In developing limbs, expressed before chrondrocytes form (stage 52 tadpoles) and throughout the cartilaginous anlagen until stage 56, after which expression ceases in the enlarged cells of the diaphysis. At later stages, expression continues in the chondrocytes of the epiphysis and metaphysis, and weak expression is seen in most of the diaphysis.

The protein localises to the nucleus. Its subcellular location is the cytoplasm. Functionally, transcription factor that plays a key role in chondrocytes differentiation and skeletal development. Specifically binds the 5'-ACAAAG-3' DNA motif present in enhancers and super-enhancers and promotes expression of genes important for chondrogenesis, including COL2A1. Plays a central role in successive steps of chondrocyte differentiation. Absolutely required for precartilaginous condensation, the first step in chondrogenesis during which skeletal progenitors differentiate into prechondrocytes. Together with SOX5 and SOX6, required for overt chondrogenesis when condensed prechondrocytes differentiate into early stage chondrocytes, the second step in chondrogenesis. Later, required to direct hypertrophic maturation and block osteoblast differentiation of growth plate chondrocytes: maintains chondrocyte columnar proliferation, delays prehypertrophy and then prevents osteoblastic differentiation of chondrocytes. Also required for chondrocyte hypertrophy, both indirectly, by keeping the lineage fate of chondrocytes, and directly, by remaining present in upper hypertrophic cells. Low lipid levels are the main nutritional determinant for chondrogenic commitment of skeletal progenitor cells: when lipids levels are low, FOXO transcription factors promote expression of SOX9, which induces chondrogenic commitment and suppresses fatty acid oxidation. In addition to cartilage development, also acts as a regulator of proliferation and differentiation in epithelial stem/progenitor cells. Unlikely to play a role in sex determination but may function during testicular and ovarian differentiation. This is Transcription factor Sox-9 from Xenopus tropicalis (Western clawed frog).